Reading from the N-terminus, the 180-residue chain is NAD(P)H-quinone oxidoreductase subunit I, chloroplastic (180 aa).

2 consecutive 4Fe-4S ferredoxin-type domains span residues 55 to 84 (GRIH…VDWK) and 95 to 124 (LNYS…MTEE). The [4Fe-4S] cluster site is built by Cys-64, Cys-67, Cys-70, Cys-74, Cys-104, Cys-107, Cys-110, and Cys-114.

The protein belongs to the complex I 23 kDa subunit family. As to quaternary structure, NDH is composed of at least 16 different subunits, 5 of which are encoded in the nucleus. Requires [4Fe-4S] cluster as cofactor.

It is found in the plastid. It localises to the chloroplast thylakoid membrane. The enzyme catalyses a plastoquinone + NADH + (n+1) H(+)(in) = a plastoquinol + NAD(+) + n H(+)(out). It catalyses the reaction a plastoquinone + NADPH + (n+1) H(+)(in) = a plastoquinol + NADP(+) + n H(+)(out). NDH shuttles electrons from NAD(P)H:plastoquinone, via FMN and iron-sulfur (Fe-S) centers, to quinones in the photosynthetic chain and possibly in a chloroplast respiratory chain. The immediate electron acceptor for the enzyme in this species is believed to be plastoquinone. Couples the redox reaction to proton translocation, and thus conserves the redox energy in a proton gradient. In Nandina domestica (Heavenly bamboo), this protein is NAD(P)H-quinone oxidoreductase subunit I, chloroplastic.